We begin with the raw amino-acid sequence, 329 residues long: IDS-like terpene synthase 1 (329 aa).

Mg(2+) contacts are provided by D79 and D83.

The protein belongs to the FPP/GGPP synthase family. The cofactor is Mg(2+).

The catalysed reaction is (2E)-geranyl diphosphate + H2O = linalool + diphosphate. It carries out the reaction (2E,6E)-farnesyl diphosphate + H2O = (6E)-nerolidol + diphosphate. Terpene synthase that shows monoterpene synthase activity and produces linalool, using geranyl diphosphate (GPP) as substrate. Also shows sesquiterpene synthase activity as it is able to convert farnesyl diphosphate (FPP) into (E)-nerolidol. In Melampsora lini (Rust fungus), this protein is IDS-like terpene synthase 1.